Here is a 381-residue protein sequence, read N- to C-terminus: Adenylate cyclase (381 aa).

Positions 1 to 30 (MTVDDTGSGADGDGRVDPEPAPDSADPGED) are disordered. Residues 191-300 (AVGFADLVGF…TTVNLASRLT (110 aa)) form the Guanylate cyclase domain. Residues Asp-196 and Asp-240 each contribute to the Mg(2+) site.

It belongs to the adenylyl cyclase class-3 family. Mg(2+) is required as a cofactor.

The enzyme catalyses ATP = 3',5'-cyclic AMP + diphosphate. The polypeptide is Adenylate cyclase (cya) (Streptomyces coelicolor (strain ATCC BAA-471 / A3(2) / M145)).